The primary structure comprises 437 residues: Glucose-1-phosphate adenylyltransferase (437 aa).

Residues Tyr113, Gly179, 194–195 (EK), and Ser212 contribute to the alpha-D-glucose 1-phosphate site.

The protein belongs to the bacterial/plant glucose-1-phosphate adenylyltransferase family. As to quaternary structure, homotetramer.

The enzyme catalyses alpha-D-glucose 1-phosphate + ATP + H(+) = ADP-alpha-D-glucose + diphosphate. Its pathway is glycan biosynthesis; glycogen biosynthesis. Functionally, involved in the biosynthesis of ADP-glucose, a building block required for the elongation reactions to produce glycogen. Catalyzes the reaction between ATP and alpha-D-glucose 1-phosphate (G1P) to produce pyrophosphate and ADP-Glc. This Haemophilus influenzae (strain 86-028NP) protein is Glucose-1-phosphate adenylyltransferase.